A 191-amino-acid polypeptide reads, in one-letter code: Calcium-binding protein L (191 aa).

Gly-2 carries the N-myristoyl glycine lipid modification. EF-hand domains follow at residues 25 to 59 (EQVS…RFKD), 60 to 95 (YDDA…ITKS), and 96 to 131 (PVSD…ALNT). Residues Asp-73, Asp-75, Asn-77, Arg-79, and Glu-84 each coordinate Ca(2+).

It belongs to the recoverin family.

The sequence is that of Calcium-binding protein L (cbpL) from Dictyostelium discoideum (Social amoeba).